A 539-amino-acid chain; its full sequence is Glycine betaine transporter 2 (539 aa).

The next 12 helical transmembrane spans lie at 44–64 (LTNPVFWLSGSFLSLFVLLAL), 85–105 (FGAYWQVLLLLNFLIGLALAF), 129–149 (IVLCTLLAGGGVFWAAAEPIA), 175–195 (FMHWGFLAWAILGCLSSIVLM), 231–251 (CSIIAVAAGTIGPIGFLGLQI), 265–285 (FITQSMVIVAAIVMYTLSALS), 299–319 (IILSVLLIGYILFFGPTSFII), 348–368 (WWTVFFWGWFIGYGPMMAIFI), 380–400 (LILSISIAAPLITCFWFSIVG), 426–446 (VLLAITGELPFPMIISVLFLI), 480–500 (FWGLMMGVVAIALISMGSGGI), and 503–523 (LQSFIVITAVPVSFILLPSIL).

Belongs to the BCCT transporter (TC 2.A.15) family.

Its subcellular location is the cell inner membrane. In terms of biological role, involved in the uptake of the osmoprotectant glycine betaine. This chain is Glycine betaine transporter 2, found in Vibrio parahaemolyticus serotype O3:K6 (strain RIMD 2210633).